The following is a 358-amino-acid chain: Na(+)/H(+) exchange regulatory cofactor NHE-RF1 (358 aa).

An N-acetylserine modification is found at S2. Phosphoserine is present on residues S2 and S46. In terms of domain architecture, PDZ 1 spans 14–94 (LCCLEKGPNG…AVRLLVVDPE (81 aa)). Residues 114 to 134 (QETPGQAEPAAAAEAQGAGNE) are compositionally biased toward low complexity. Disordered stretches follow at residues 114-192 (QETP…EASG) and 269-358 (SREA…FSNL). Positions 135–149 (NEPREADKSHPEQRK) are enriched in basic and acidic residues. Residues 154-234 (LCTMKKGPSG…ETKLLVVDRE (81 aa)) enclose the PDZ 2 domain. Phosphoserine occurs at positions 162, 269, 280, 290, and 291. Positions 287 to 306 (RSASSDTSEELNSQDSPPKQ) are enriched in polar residues. T293 carries the post-translational modification Phosphothreonine. 3 positions are modified to phosphoserine: S294, S299, and S302. Positions 307–319 (DSTAPSSTSSSDP) are enriched in low complexity. Over residues 348–358 (WSKKNELFSNL) the composition is skewed to basic and acidic residues.

In terms of assembly, homodimer, and heterodimer with NHERF2. Binds the N-termini of EZR, RDX and MSN. Binds the C-termini of PDGFRA, PDGFRB, ADRB2, NOS2 and CFTR. Binds ARHGAP17, EPI64, RACK1, OPRK1, GNAQ, CTNNB1 and PLCB3. Binds PDZK1. Interacts with CLCN3. Binds the C-terminus of PAG1. In resting T-cells, part of a PAG1-NHERF1-MSN complex which is disrupted upon TCR activation. Forms a complex with CFTR and SLC4A7. Forms a complex with SLC4A7 and ATP6V1B1. Interacts with TRPC4 (via the PDZ-binding domain). Directly interacts with HTR4. Interacts (via the PDZ 1 domain) with PODXL (via the C-terminal PDZ-binding motif DTHL); interaction is not detected in glomerular epithelium cells. Interacts (via the PDZ 1 domain) with PODXL (via the C-terminal PDZ-binding motif DTHL); the interaction take place early in the secretory pathway and is necessary for its apical membrane sorting. Interacts with SLC26A3. Interacts with MCC. Interacts with SLC34A1. Interacts (via the PDZ domains) with SLC26A6 isoform 4 and isoform 5. Interacts (via PDZ domains) with ACE2 (via PDZ-binding motif); the interaction may enhance ACE2 membrane residence. In terms of processing, phosphorylated on serine residues.

It localises to the cytoplasm. The protein localises to the apical cell membrane. Its subcellular location is the endomembrane system. It is found in the cell projection. The protein resides in the filopodium. It localises to the ruffle. The protein localises to the microvillus. In terms of biological role, scaffold protein that connects plasma membrane proteins with members of the ezrin/moesin/radixin family and thereby helps to link them to the actin cytoskeleton and to regulate their surface expression. Necessary for recycling of internalized ADRB2. Was first known to play a role in the regulation of the activity and subcellular location of SLC9A3. Necessary for cAMP-mediated phosphorylation and inhibition of SLC9A3. Involved in sperm capacitation. May participate in the regulation of the chloride and bicarbonate homeostasis in spermatozoa. May enhance Wnt signaling. May participate in HTR4 targeting to microvilli. Involved in the regulation of phosphate reabsorption in the renal proximal tubules. This is Na(+)/H(+) exchange regulatory cofactor NHE-RF1 (NHERF1) from Macaca fascicularis (Crab-eating macaque).